The primary structure comprises 614 residues: Phragmoplastin DRP1C (614 aa).

One can recognise a Dynamin-type G domain in the interval 32 to 301; it reads WEALPTVAVV…LETVIRQKIP (270 aa). Residues 42–49 are G1 motif; it reads GGQSSGKS. A GTP-binding site is contributed by 45 to 50; it reads SSGKSS. Positions 68-70 are G2 motif; that stretch reads VTR. The interval 143-146 is G3 motif; the sequence is DLPG. Positions 212–215 are G4 motif; the sequence is TKLD. GTP-binding positions include 213 to 218 and 243 to 246; these read KLDIMD and NRSQ. The segment at 242 to 245 is G5 motif; it reads VNRS. The segment at 499–519 is disordered; sequence EPEKEKPNPRNAPAPNADPYS. Low complexity predominate over residues 507–517; it reads PRNAPAPNADP. The GED domain occupies 523–614; the sequence is FRKIGSNVSA…RDDIDAVAWK (92 aa).

The protein belongs to the TRAFAC class dynamin-like GTPase superfamily. Dynamin/Fzo/YdjA family. Forms homodimer and may homooligomerize and heterooligomerize to form the phragmoplastin complex. Binds to PHIP1. Ubiquitous.

The protein resides in the cytoplasm. It is found in the cytoskeleton. The protein localises to the cell cortex. Its subcellular location is the cytoplasmic vesicle. It localises to the clathrin-coated vesicle. The protein resides in the phragmoplast. It catalyses the reaction GTP + H2O = GDP + phosphate + H(+). Its function is as follows. Microtubule-associated force-producing protein that is targeted to the growing edges of the cell plate during cytokinesis. Also plays a major role in plasma membrane maintenance during pollen maturation. Has a GTPase activity. The protein is Phragmoplastin DRP1C of Arabidopsis thaliana (Mouse-ear cress).